A 174-amino-acid chain; its full sequence is 3-hydroxydecanoyl-[acyl-carrier-protein] dehydratase (174 aa).

His-73 is an active-site residue.

This sequence belongs to the thioester dehydratase family. FabA subfamily. As to quaternary structure, homodimer.

The protein resides in the cytoplasm. It carries out the reaction a (3R)-hydroxyacyl-[ACP] = a (2E)-enoyl-[ACP] + H2O. The catalysed reaction is (3R)-hydroxydecanoyl-[ACP] = (2E)-decenoyl-[ACP] + H2O. The enzyme catalyses (2E)-decenoyl-[ACP] = (3Z)-decenoyl-[ACP]. It participates in lipid metabolism; fatty acid biosynthesis. Necessary for the introduction of cis unsaturation into fatty acids. Catalyzes the dehydration of (3R)-3-hydroxydecanoyl-ACP to E-(2)-decenoyl-ACP and then its isomerization to Z-(3)-decenoyl-ACP. Can catalyze the dehydratase reaction for beta-hydroxyacyl-ACPs with saturated chain lengths up to 16:0, being most active on intermediate chain length. This Saccharophagus degradans (strain 2-40 / ATCC 43961 / DSM 17024) protein is 3-hydroxydecanoyl-[acyl-carrier-protein] dehydratase.